Here is a 464-residue protein sequence, read N- to C-terminus: Arginine biosynthesis bifunctional protein ArgJ, mitochondrial (464 aa).

Residues 1–22 constitute a mitochondrion transit peptide; that stretch reads MAASFKALPQQLTLTRSFARCY. Thr193, Lys222, Thr233, Glu320, Asn459, and Thr464 together coordinate substrate. Thr233 serves as the catalytic Nucleophile.

The protein belongs to the ArgJ family. As to quaternary structure, heterodimer of an alpha and a beta chain. Post-translationally, the alpha and beta chains are autoproteolytically processed from a single precursor protein within the mitochondrion.

The protein resides in the mitochondrion matrix. It catalyses the reaction N(2)-acetyl-L-ornithine + L-glutamate = N-acetyl-L-glutamate + L-ornithine. It carries out the reaction L-glutamate + acetyl-CoA = N-acetyl-L-glutamate + CoA + H(+). It functions in the pathway amino-acid biosynthesis; L-arginine biosynthesis; L-ornithine and N-acetyl-L-glutamate from L-glutamate and N(2)-acetyl-L-ornithine (cyclic): step 1/1. It participates in amino-acid biosynthesis; L-arginine biosynthesis; N(2)-acetyl-L-ornithine from L-glutamate: step 1/4. In terms of biological role, catalyzes two activities which are involved in the cyclic version of arginine biosynthesis: the synthesis of acetylglutamate from glutamate and acetyl-CoA, and of ornithine by transacetylation between acetylornithine and glutamate. The protein is Arginine biosynthesis bifunctional protein ArgJ, mitochondrial of Verticillium alfalfae (strain VaMs.102 / ATCC MYA-4576 / FGSC 10136) (Verticillium wilt of alfalfa).